Reading from the N-terminus, the 126-residue chain is Plastocyanin (126 aa).

A signal peptide spans 1–28; sequence MSKKFLTILAGLLLVVSSFFLSVSPAAA. The Plastocyanin-like domain maps to 29-126; that stretch reads ANATVKMGSD…AGMVGKVVVE (98 aa). Residues His-67, Cys-111, His-114, and Met-119 each contribute to the Cu cation site.

Belongs to the plastocyanin family. Requires Cu(2+) as cofactor.

Its subcellular location is the cellular thylakoid membrane. Participates in electron transfer between P700 and the cytochrome b6-f complex in photosystem I. The sequence is that of Plastocyanin (petE) from Synechocystis sp. (strain ATCC 27184 / PCC 6803 / Kazusa).